A 279-amino-acid chain; its full sequence is 2-dehydro-3-deoxyphosphooctonate aldolase (279 aa).

This sequence belongs to the KdsA family.

The protein resides in the cytoplasm. It carries out the reaction D-arabinose 5-phosphate + phosphoenolpyruvate + H2O = 3-deoxy-alpha-D-manno-2-octulosonate-8-phosphate + phosphate. Its pathway is carbohydrate biosynthesis; 3-deoxy-D-manno-octulosonate biosynthesis; 3-deoxy-D-manno-octulosonate from D-ribulose 5-phosphate: step 2/3. It participates in bacterial outer membrane biogenesis; lipopolysaccharide biosynthesis. This chain is 2-dehydro-3-deoxyphosphooctonate aldolase, found in Desulfosudis oleivorans (strain DSM 6200 / JCM 39069 / Hxd3) (Desulfococcus oleovorans).